A 42-amino-acid chain; its full sequence is MDNNFLKYLSTAPVLLTIWLSFTAALVIEANRFYPDMLYFPI.

The chain crosses the membrane as a helical span at residues 8–28 (YLSTAPVLLTIWLSFTAALVI).

This sequence belongs to the PsaJ family.

Its subcellular location is the plastid. It localises to the chloroplast thylakoid membrane. In terms of biological role, may help in the organization of the PsaE and PsaF subunits. This is Photosystem I reaction center subunit IX from Guillardia theta (Cryptophyte).